The sequence spans 2641 residues: Prosolanapyrone synthase (2641 aa).

The Ketosynthase family 3 (KS3) domain maps to 14–440 (PEPIAIVGMG…GANGHCIIDD (427 aa)). Active-site for beta-ketoacyl synthase activity residues include Cys187, His323, and His363. Residues 456 to 515 (SIGHINGHTNGHTNGHTNGHTNGHTNGHTNGHTNGAHASDGHNGHHQNGMNGNSASHMSE) form a disordered region. Positions 461–490 (NGHTNGHTNGHTNGHTNGHTNGHTNGHTNG) are enriched in low complexity. A malonyl-CoA:ACP transacylase (MAT) region spans residues 619–920 (FVFTGQGAQW…KGPVGQISRS (302 aa)). The interval 1011 to 1149 (HDLLGSKLPG…GRVRVIAGTS (139 aa)) is N-terminal hotdog fold. The dehydratase (DH) domain stretch occupies residues 1011–1309 (HDLLGSKLPG…GNLRCVTYTE (299 aa)). One can recognise a PKS/mFAS DH domain in the interval 1011-1313 (HDLLGSKLPG…CVTYTEVLPS (303 aa)). His1043 serves as the catalytic Proton acceptor; for dehydratase activity. Residues 1161–1313 (ARTLDTKAWY…CVTYTEVLPS (153 aa)) are C-terminal hotdog fold. The active-site Proton donor; for dehydratase activity is Asp1227. A methyltransferase (MT) domain region spans residues 1477–1665 (TGAYPQLVRF…GAELVLDDYP (189 aa)). Residues 1894–2206 (GLLTSLYFKP…KGTHVGKLVV (313 aa)) are enoyl reductase (ER) domain. The ketoreductase (KR) domain stretch occupies residues 2231–2408 (NYLITGGLGG…STVSFGLIRD (178 aa)). One can recognise a Carrier domain in the interval 2561–2639 (RTVALVTDAI…ILANKIVDGA (79 aa)). Ser2598 bears the O-(pantetheine 4'-phosphoryl)serine mark.

The protein operates within phytotoxin biosynthesis. Prosolanapyrone synthase; part of the gene cluster that mediates the biosynthesis of the phytotoxin solanapyrone, a causal agent of early blight disease of potato and tomato. The prosolanapyrone synthase sol1 is a polyketide synthase that produces the octaketide desmethylprosolanapyrone I via sequential condensations of 7 malonyl-CoA units with one acetyl-CoA unit, and one methylation step. The octaketide backbone is further methylated by the sol2 O-methyltransferase to yield prosolanapyrone I. Prosolanapyrone I is hydroxylated to prosolanapyrone II by the cytochrome P450 monooxygenase sol6. The solanapyrone synthase sol5 then catalyzes the oxidation of prosolanapyrone II and the subsequent Diels Alder cycloisomerization of the product prosolanapyrone III to solanapyrones A and D. Solanapyrones A and D are then converted into solanapyrones B and E, respectively, by the sol3 dehydrogenase. The chain is Prosolanapyrone synthase (sol1) from Alternaria solani.